Reading from the N-terminus, the 433-residue chain is Xylose isomerase (433 aa).

Residues Asp-305 and Asp-307 each coordinate Mg(2+).

This sequence belongs to the xylose isomerase family. As to quaternary structure, homotetramer. It depends on Mg(2+) as a cofactor.

The protein resides in the cytoplasm. The catalysed reaction is alpha-D-xylose = alpha-D-xylulofuranose. This Cereibacter sphaeroides (strain KD131 / KCTC 12085) (Rhodobacter sphaeroides) protein is Xylose isomerase.